We begin with the raw amino-acid sequence, 63 residues long: Transmembrane protein ZNF593OS (63 aa).

A helical membrane pass occupies residues 30–50; that stretch reads LAGVVATVLAVLGLGGSCYAV.

Its subcellular location is the membrane. This Homo sapiens (Human) protein is Transmembrane protein ZNF593OS.